The primary structure comprises 134 residues: Small ribosomal subunit protein uS8c (134 aa).

Belongs to the universal ribosomal protein uS8 family. In terms of assembly, part of the 30S ribosomal subunit.

The protein resides in the plastid. It is found in the chloroplast. In terms of biological role, one of the primary rRNA binding proteins, it binds directly to 16S rRNA central domain where it helps coordinate assembly of the platform of the 30S subunit. This is Small ribosomal subunit protein uS8c (rps8) from Draba nemorosa (Woodland whitlowgrass).